The following is a 131-amino-acid chain: Glycine cleavage system H protein (131 aa).

One can recognise a Lipoyl-binding domain in the interval 24–106; that stretch reads TVRIGITDYA…YGEGWLVDLE (83 aa). Position 65 is an N6-lipoyllysine (Lys65).

The protein belongs to the GcvH family. In terms of assembly, the glycine cleavage system is composed of four proteins: P, T, L and H. (R)-lipoate serves as cofactor.

In terms of biological role, the glycine cleavage system catalyzes the degradation of glycine. The H protein shuttles the methylamine group of glycine from the P protein to the T protein. This Mycobacteroides abscessus (strain ATCC 19977 / DSM 44196 / CCUG 20993 / CIP 104536 / JCM 13569 / NCTC 13031 / TMC 1543 / L948) (Mycobacterium abscessus) protein is Glycine cleavage system H protein.